A 466-amino-acid chain; its full sequence is ATP synthase subunit beta (466 aa).

156–163 (GGAGVGKT) lines the ATP pocket.

This sequence belongs to the ATPase alpha/beta chains family. In terms of assembly, F-type ATPases have 2 components, CF(1) - the catalytic core - and CF(0) - the membrane proton channel. CF(1) has five subunits: alpha(3), beta(3), gamma(1), delta(1), epsilon(1). CF(0) has three main subunits: a(1), b(2) and c(9-12). The alpha and beta chains form an alternating ring which encloses part of the gamma chain. CF(1) is attached to CF(0) by a central stalk formed by the gamma and epsilon chains, while a peripheral stalk is formed by the delta and b chains.

Its subcellular location is the cell inner membrane. It carries out the reaction ATP + H2O + 4 H(+)(in) = ADP + phosphate + 5 H(+)(out). In terms of biological role, produces ATP from ADP in the presence of a proton gradient across the membrane. The catalytic sites are hosted primarily by the beta subunits. The protein is ATP synthase subunit beta of Polynucleobacter necessarius subsp. necessarius (strain STIR1).